The primary structure comprises 517 residues: MRFPNRKLHTAVNGGDSGVSTHFRNPFVHELRFTTLQKLKIAVMTVTLFPVRLLFAAFMMLLAWPFAFVATVGRSENAVEPLSWWRWLVDLALKAIMRAMWFSGGFHWVRVKGRPALPSEAPILTMAPHSSYFDAIPVTMTMASIVMKAESKDIPVWGTLIKFIRPVFVSRSDQDSRRKTVEEIKRRASSNGEWPQIMIFPEGTCTNRSCLIAFKPGAFIPGVPVQPVVLRYPNELDTISWTWQGPGAFKILWLTLCQLHNFVEIEYLPTYTPSEEEKKDPALFASNVRRIMAKALGLPIIDYSFEDCQLAMAKGPLRLPKHTCLLEFARLVRLLGLKTKVTDEVLQEEACSARQLCGRRLDMEGFAQYLHQPMTEAVQDIFSLFEEHGMMDVREYVIALSVVCRPFRYLDTVKLAFRMFEAQEDGAIVEDELTVILKTALGVGDLAVSELFRAIDSQDKGKITFDELCSFMEKCPDLVEQYHCLCESISQHSRESTSSSNGFCADFSPRNHSKKQD.

Residues 1–52 (MRFPNRKLHTAVNGGDSGVSTHFRNPFVHELRFTTLQKLKIAVMTVTLFPVR) lie on the Cytoplasmic side of the membrane. A helical; Signal-anchor for type II membrane protein membrane pass occupies residues 53 to 73 (LLFAAFMMLLAWPFAFVATVG). Topologically, residues 74–517 (RSENAVEPLS…SPRNHSKKQD (444 aa)) are lumenal. Residues 129-134 (HSSYFD) carry the HXXXXD motif motif. Residue N207 is glycosylated (N-linked (GlcNAc...) asparagine). The EF-hand domain occupies 443–478 (VGDLAVSELFRAIDSQDKGKITFDELCSFMEKCPDL). An N-linked (GlcNAc...) asparagine glycan is attached at N511. A Di-lysine motif motif is present at residues 514–517 (KKQD).

Belongs to the 1-acyl-sn-glycerol-3-phosphate acyltransferase family.

The protein resides in the endoplasmic reticulum membrane. Its subcellular location is the golgi apparatus membrane. It localises to the cell membrane. The protein localises to the lipid droplet. It catalyses the reaction a 1-acyl-sn-glycero-3-phosphocholine + an acyl-CoA = a 1,2-diacyl-sn-glycero-3-phosphocholine + CoA. It carries out the reaction a 1-O-alkyl-sn-glycero-3-phosphocholine + acetyl-CoA = a 1-O-alkyl-2-acetyl-sn-glycero-3-phosphocholine + CoA. The catalysed reaction is a 1-acyl-sn-glycero-3-phosphate + an acyl-CoA = a 1,2-diacyl-sn-glycero-3-phosphate + CoA. The enzyme catalyses a 1-O-(1Z-alkenyl)-sn-glycero-3-phosphocholine + an acyl-CoA = a 1-O-(1Z-alkenyl)-2-acyl-sn-glycero-3-phosphocholine + CoA. It catalyses the reaction 1-acyl-sn-glycero-3-phospho-(1'-sn-glycerol) + an acyl-CoA = a 1,2-diacyl-sn-glycero-3-phospho-(1'-sn-glycerol) + CoA. It carries out the reaction 1-hexadecanoyl-sn-glycero-3-phosphocholine + hexadecanoyl-CoA = 1,2-dihexadecanoyl-sn-glycero-3-phosphocholine + CoA. The catalysed reaction is 1-O-hexadecyl-sn-glycero-3-phosphocholine + hexadecanoyl-CoA = 1-O-hexadecyl-2-hexadecanoyl-sn-glycero-3-phosphocholine + CoA. The enzyme catalyses a 1-O-(1Z-alkenyl)-sn-glycero-3-phosphocholine + hexadecanoyl-CoA = 1-O-(1Z)-alkenyl-2-hexadecanoyl-sn-glycero-3-phosphocholine + CoA. It catalyses the reaction 1-hexadecanoyl-sn-glycero-3-phospho-(1'-sn-glycerol) + hexadecanoyl-CoA = 1,2-dihexadecanoyl-sn-glycero-3-phospho-(1'-sn-glycerol) + CoA. It carries out the reaction 1-dodecanoyl-sn-glycero-3-phosphocholine + hexadecanoyl-CoA = 1-dodecanoyl-2-hexadecanoyl-sn-glycero-3-phosphocholine + CoA. The catalysed reaction is 1-tetradecanoyl-sn-glycero-3-phosphocholine + hexadecanoyl-CoA = 1-tetradecanoyl-2-hexadecanoyl-sn-glycero-3-phosphocholine + CoA. The enzyme catalyses 1-O-octadecyl-sn-glycero-3-phosphocholine + hexadecanoyl-CoA = 1-O-octadecyl-2-hexadecanoyl-sn-glycero-3-phosphocholine + CoA. It catalyses the reaction 1-octadecanoyl-sn-glycero-3-phosphocholine + hexadecanoyl-CoA = 1-octadecanoyl-2-hexadecanoyl-sn-glycero-3-phosphocholine + CoA. It carries out the reaction 1-(9Z-octadecenoyl)-sn-glycero-3-phosphocholine + hexadecanoyl-CoA = 1-(9Z-octadecenoyl)-2-hexadecanoyl-sn-glycero-3-phosphocholine + CoA. The catalysed reaction is 1-eicosanoyl-sn-glycero-3-phosphocholine + hexadecanoyl-CoA = 1-eicosanoyl-2-hexadecanoyl-sn-glycero-3-phosphocholine + CoA. The enzyme catalyses hexanoyl-CoA + 1-hexadecanoyl-sn-glycero-3-phosphocholine = 1-hexadecanoyl-2-hexanoyl-sn-glycero-3-phosphocholine + CoA. It catalyses the reaction octanoyl-CoA + 1-hexadecanoyl-sn-glycero-3-phosphocholine = 1-hexadecanoyl-2-octanoyl-sn-glycero-3-phosphocholine + CoA. It carries out the reaction decanoyl-CoA + 1-hexadecanoyl-sn-glycero-3-phosphocholine = 1-hexadecanoyl-2-decanoyl-sn-glycero-3-phosphocholine + CoA. The catalysed reaction is dodecanoyl-CoA + 1-hexadecanoyl-sn-glycero-3-phosphocholine = 1-hexadecanoyl-2-dodecanoyl-sn-glycero-3-phosphocholine + CoA. The enzyme catalyses tetradecanoyl-CoA + 1-hexadecanoyl-sn-glycero-3-phosphocholine = 1-hexadecanoyl-2-tetradecanoyl-sn-glycero-3-phosphocholine + CoA. It catalyses the reaction 1-hexadecanoyl-sn-glycero-3-phosphocholine + (9Z)-octadecenoyl-CoA = 1-hexadecanoyl-2-(9Z-octadecenoyl)-sn-glycero-3-phosphocholine + CoA. It carries out the reaction (9Z,12Z)-octadecadienoyl-CoA + 1-hexadecanoyl-sn-glycero-3-phosphocholine = 1-hexadecanoyl-2-(9Z,12Z-octadecadienoyl)-sn-glycero-3-phosphocholine + CoA. The catalysed reaction is (4Z,7Z,10Z,13Z,16Z,19Z)-docosahexaenoyl-CoA + 1-hexadecanoyl-sn-glycero-3-phosphocholine = 1-hexadecanoyl-2-(4Z,7Z,10Z,13Z,16Z,19Z-docosahexaenoyl)-sn-glycero-3-phosphocholine + CoA. The enzyme catalyses 1-hexadecanoyl-sn-glycero-3-phosphocholine + acetyl-CoA = 1-hexadecanoyl-2-acetyl-sn-glycero-3-phosphocholine + CoA. It catalyses the reaction eicosanoyl-CoA + 1-hexadecanoyl-sn-glycero-3-phosphocholine = 1-hexadecanoyl-2-eicosanoyl-sn-glycero-3-phosphocholine + CoA. It carries out the reaction 1-O-hexadecyl-sn-glycero-3-phosphocholine + acetyl-CoA = 1-O-hexadecyl-2-acetyl-sn-glycero-3-phosphocholine + CoA. The catalysed reaction is a 1-acyl-sn-glycero-3-phosphocholine + hexadecanoyl-CoA = 1-acyl-2-hexadecanoyl-sn-glycero-3-phosphocholine + CoA. The enzyme catalyses a 1-acyl-sn-glycero-3-phosphate + hexadecanoyl-CoA = 1-acyl-2-hexadecanoyl-sn-glycero-3-phosphate + CoA. It catalyses the reaction 1-acyl-sn-glycero-3-phospho-(1'-sn-glycerol) + hexadecanoyl-CoA = 1-acyl-2-hexadecanoyl-sn-glycero-3-phospho-(1'-sn-glycerol) + CoA. It participates in lipid metabolism; phospholipid metabolism. Functionally, exhibits both acyltransferase and acetyltransferase activities. Activity is calcium-independent. Catalyzes the conversion of lysophosphatidylcholine (1-acyl-sn-glycero-3-phosphocholine or LPC) into phosphatidylcholine (1,2-diacyl-sn-glycero-3-phosphocholine or PC). Catalyzes the conversion 1-acyl-sn-glycerol-3-phosphate (lysophosphatidic acid or LPA) into 1,2-diacyl-sn-glycerol-3-phosphate (phosphatidic acid or PA) by incorporating an acyl moiety at the sn-2 position of the glycerol backbone. The chain is Lysophosphatidylcholine acyltransferase 1 (lpcat1) from Danio rerio (Zebrafish).